We begin with the raw amino-acid sequence, 298 residues long: MLKLAFVTFLFALASARPQDVDSNRVVALPQDNFEVTDIGFEKIKAEPAPEVVNNDASYAYAVDISVPTTVSQMNCLKTSRYAAVFIRGFTPFGSGAFDTTSVTSIRNAYSAGLGIEVYMTPQPLSSLQGYQQLDALYNGLNGNGITIRSVWIQVTSPANWQKSATTNVNFLNSIISRAKQYGLTVGIYTNQYDWSQITGNWATLSSDVLLWYWHVLGGGVTGETPATFDDFRAFGSFKKASVKQFAQVESVCSLTVNRDVYVVGIPAAASSKNTDFFTQEDISSNNKKIVVGGVIGV.

An N-terminal signal peptide occupies residues 1–16; that stretch reads MLKLAFVTFLFALASA. The region spanning 59–277 is the Ch-type lysozyme domain; the sequence is YAYAVDISVP…AAASSKNTDF (219 aa).

The protein belongs to the glycosyl hydrolase 25 family. As to expression, expressed in intestine, IL2 and IL6 neurons and some neurons in the head ganglia.

Its subcellular location is the cytoplasmic vesicle lumen. Involved in resistance to Gram-negative bacterium S.marcescens and to bacterium Gram-positive S.aureus infection. The protein is Lysozyme-like protein 1 of Caenorhabditis elegans.